A 291-amino-acid polypeptide reads, in one-letter code: GTPase Era (291 aa).

The Era-type G domain maps to 2 to 167 (KSGFVSIIGR…LDEIVKCLNE (166 aa)). Positions 10-17 (GRTNAGKS) are G1. Position 10-17 (10-17 (GRTNAGKS)) interacts with GTP. The segment at 36–40 (NATRR) is G2. The tract at residues 57–60 (DTPG) is G3. GTP is bound by residues 57–61 (DTPGL) and 116–119 (NKVD). Residues 116 to 119 (NKVD) are G4. Residues 146 to 148 (YSS) form a G5 region. Residues 186 to 274 (YRDFILESIY…LLKLFVTVKK (89 aa)) form the KH type-2 domain.

Belongs to the TRAFAC class TrmE-Era-EngA-EngB-Septin-like GTPase superfamily. Era GTPase family. As to quaternary structure, monomer.

It is found in the cytoplasm. Its subcellular location is the cell inner membrane. An essential GTPase that binds both GDP and GTP, with rapid nucleotide exchange. Plays a role in 16S rRNA processing and 30S ribosomal subunit biogenesis and possibly also in cell cycle regulation and energy metabolism. This is GTPase Era from Campylobacter jejuni subsp. doylei (strain ATCC BAA-1458 / RM4099 / 269.97).